We begin with the raw amino-acid sequence, 479 residues long: Aldehyde dehydrogenase family 3 member B3 (479 aa).

Catalysis depends on residues Glu223 and Cys257. Residue Cys476 is the site of S-geranylgeranyl cysteine attachment. Positions 477–479 are cleaved as a propeptide — removed in mature form; that stretch reads TLL.

Belongs to the aldehyde dehydrogenase family. Geranylgeranylation is important for membrane localization and enzyme activity. In terms of tissue distribution, expressed in testis, kidney, small intestine, spleen, white adipose tissue, liver and lung.

It localises to the cell membrane. It carries out the reaction an aldehyde + NAD(+) + H2O = a carboxylate + NADH + 2 H(+). It catalyses the reaction hexadecanoate + NADH + 2 H(+) = hexadecanal + NAD(+) + H2O. The enzyme catalyses octanal + NAD(+) + H2O = octanoate + NADH + 2 H(+). Oxidizes medium and long chain aldehydes into non-toxic fatty acids. This Mus musculus (Mouse) protein is Aldehyde dehydrogenase family 3 member B3.